Reading from the N-terminus, the 512-residue chain is SWI/SNF complex subunit SWI3A (512 aa).

One can recognise an SWIRM domain in the interval Tyr13–His110. In terms of domain architecture, SANT spans Ser223–Phe274. A disordered region spans residues Asp291 to Lys325. The stretch at Ala424–Gln488 forms a coiled coil.

In terms of assembly, homodimers and heterodimers. Interacts with SWI3B, SWI3C, BSH, and the C-terminus of FCA, but not with BRM or SWI3D. Expressed in roots, stems, leaves and flowers, but not in siliques.

The protein resides in the nucleus. Its function is as follows. Component of a multiprotein complex equivalent of the SWI/SNF complex, an ATP-dependent chromatin-remodeling complex, which is required for the positive and negative regulation of gene expression of a large number of genes. It changes chromatin structure by altering DNA-histone contacts within a nucleosome, leading eventually to a change in nucleosome position, thus facilitating or repressing binding of gene-specific transcription factors. This is SWI/SNF complex subunit SWI3A (SWI3A) from Arabidopsis thaliana (Mouse-ear cress).